Consider the following 787-residue polypeptide: Mitochondrial intermediate peptidase (787 aa).

Residues 1–36 (MQNKVLRGILFKNVPLGYSYNRSIRHPTFGNSIIRW) constitute a mitochondrion transit peptide. His573 is a binding site for Zn(2+). Glu574 is a catalytic residue. 2 residues coordinate Zn(2+): His577 and His580.

Belongs to the peptidase M3 family. The cofactor is Zn(2+).

Its subcellular location is the mitochondrion matrix. The enzyme catalyses Release of an N-terminal octapeptide as second stage of processing of some proteins imported into the mitochondrion.. Functionally, cleaves proteins, imported into the mitochondrion, to their mature size. While most mitochondrial precursor proteins are processed to the mature form in one step by mitochondrial processing peptidase (MPP), the sequential cleavage by MIP of an octapeptide after initial processing by MPP is a required step for a subgroup of nuclear-encoded precursor proteins destined for the matrix or the inner membrane. This chain is Mitochondrial intermediate peptidase (OCT1), found in Vanderwaltozyma polyspora (strain ATCC 22028 / DSM 70294 / BCRC 21397 / CBS 2163 / NBRC 10782 / NRRL Y-8283 / UCD 57-17) (Kluyveromyces polysporus).